The primary structure comprises 346 residues: Tyrosine--tRNA ligase (346 aa).

Tyrosine 35 is a binding site for L-tyrosine. Residues 40–48 (PTGEMHIGH) carry the 'HIGH' region motif. 4 residues coordinate L-tyrosine: tyrosine 162, glutamine 166, aspartate 169, and glutamine 184.

It belongs to the class-I aminoacyl-tRNA synthetase family. TyrS type 3 subfamily. As to quaternary structure, homodimer.

Its subcellular location is the cytoplasm. It catalyses the reaction tRNA(Tyr) + L-tyrosine + ATP = L-tyrosyl-tRNA(Tyr) + AMP + diphosphate + H(+). In terms of biological role, catalyzes the attachment of tyrosine to tRNA(Tyr) in a two-step reaction: tyrosine is first activated by ATP to form Tyr-AMP and then transferred to the acceptor end of tRNA(Tyr). This Haloarcula marismortui (strain ATCC 43049 / DSM 3752 / JCM 8966 / VKM B-1809) (Halobacterium marismortui) protein is Tyrosine--tRNA ligase.